The primary structure comprises 81 residues: Putative membrane protein insertion efficiency factor (81 aa).

The protein belongs to the UPF0161 family.

The protein localises to the cell inner membrane. In terms of biological role, could be involved in insertion of integral membrane proteins into the membrane. This chain is Putative membrane protein insertion efficiency factor, found in Pseudomonas syringae pv. tomato (strain ATCC BAA-871 / DC3000).